The primary structure comprises 266 residues: 26 kDa endochitinase 2 (266 aa).

Positions 1-23 (MRSLAVVVAVVATVAMAIGTARG) are cleaved as a signal peptide. 3 disulfide bridges follow: C46–C108, C120–C128, and C227–C259. E90 acts as the Proton donor in catalysis.

This sequence belongs to the glycosyl hydrolase 19 family. Chitinase class II subfamily.

It carries out the reaction Random endo-hydrolysis of N-acetyl-beta-D-glucosaminide (1-&gt;4)-beta-linkages in chitin and chitodextrins.. Its function is as follows. Defense against chitin-containing fungal pathogens. The chain is 26 kDa endochitinase 2 from Hordeum vulgare (Barley).